The sequence spans 460 residues: Retinoic acid receptor alpha (460 aa).

Residues methionine 1–proline 87 are modulating. The disordered stretch occupies residues histidine 46–proline 78. Residues glycine 52 to glutamate 69 are compositionally biased toward polar residues. 2 NR C4-type zinc fingers span residues cysteine 88–cysteine 108 and cysteine 124–cysteine 148. A DNA-binding region (nuclear receptor) is located at residues cysteine 88–methionine 153. The tract at residues serine 154 to proline 182 is hinge. Positions glutamate 183–serine 417 constitute an NR LBD domain. A 9aaTAD motif is present at residues proline 408 to asparagine 416. Residues glutamate 418–proline 460 are disordered. Gly residues predominate over residues glycine 425–leucine 435. Positions cysteine 442–proline 460 are enriched in low complexity.

It belongs to the nuclear hormone receptor family. NR1 subfamily. As to quaternary structure, heterodimer; with an RXR molecule. Binds DNA preferentially as a RAR/RXR heterodimer. In terms of tissue distribution, ubiquitous.

The protein resides in the nucleus. Functionally, receptor for retinoic acid. Retinoic acid receptors bind as heterodimers to their target response elements in response to their ligands, all-trans or 9-cis retinoic acid, and regulate gene expression in various biological processes. The RAR/RXR heterodimers bind to the retinoic acid response elements (RARE) composed of tandem 5'-AGGTCA-3' sites known as DR1-DR5. Required for hindbrain patterning and appears to be required for skin development. This Gallus gallus (Chicken) protein is Retinoic acid receptor alpha (RARA).